The primary structure comprises 333 residues: Protoheme IX farnesyltransferase (333 aa).

Residues 1–13 (MVSSTSQIISTSP) are compositionally biased toward low complexity. Residues 1-21 (MVSSTSQIISTSPSRDDVVPS) are disordered. Transmembrane regions (helical) follow at residues 38–58 (LIPL…GWPL), 63–83 (LACT…LNCL), 109–129 (AVFT…VSGV), 132–152 (LAAG…TAFL), 160–180 (IVIG…AATG), 188–208 (WLFA…AILL), 245–265 (CFGV…LVPF), and 286–306 (AKGL…LLVV).

It belongs to the UbiA prenyltransferase family. Protoheme IX farnesyltransferase subfamily.

Its subcellular location is the cell inner membrane. It carries out the reaction heme b + (2E,6E)-farnesyl diphosphate + H2O = Fe(II)-heme o + diphosphate. It participates in porphyrin-containing compound metabolism; heme O biosynthesis; heme O from protoheme: step 1/1. Its function is as follows. Converts heme B (protoheme IX) to heme O by substitution of the vinyl group on carbon 2 of heme B porphyrin ring with a hydroxyethyl farnesyl side group. This is Protoheme IX farnesyltransferase from Prochlorococcus marinus (strain SARG / CCMP1375 / SS120).